The primary structure comprises 238 residues: Probable transcriptional regulatory protein SZO_02930 (238 aa).

Belongs to the TACO1 family. YeeN subfamily.

The protein resides in the cytoplasm. The sequence is that of Probable transcriptional regulatory protein SZO_02930 from Streptococcus equi subsp. zooepidemicus (strain H70).